We begin with the raw amino-acid sequence, 142 residues long: Endoribonuclease YbeY (142 aa).

Histidine 100, histidine 104, and histidine 110 together coordinate Zn(2+).

This sequence belongs to the endoribonuclease YbeY family. Requires Zn(2+) as cofactor.

It is found in the cytoplasm. Single strand-specific metallo-endoribonuclease involved in late-stage 70S ribosome quality control and in maturation of the 3' terminus of the 16S rRNA. This is Endoribonuclease YbeY from Helicobacter pylori (strain G27).